Here is a 97-residue protein sequence, read N- to C-terminus: Putative membrane protein insertion efficiency factor (97 aa).

It belongs to the UPF0161 family.

It is found in the cell membrane. Its function is as follows. Could be involved in insertion of integral membrane proteins into the membrane. This is Putative membrane protein insertion efficiency factor from Lactobacillus johnsonii (strain CNCM I-12250 / La1 / NCC 533).